The following is a 625-amino-acid chain: Endoglucanase D (625 aa).

The N-terminal stretch at 1-17 (SLTGVFPSGLIETKVSA) is a signal peptide. Aspartate 177 functions as the Nucleophile in the catalytic mechanism. Residues histidine 492 and aspartate 522 contribute to the active site. Glutamate 531 (proton donor) is an active-site residue. The Dockerin domain occupies 555–625 (NEVLYGDVND…LIRVIEKLPI (71 aa)).

It belongs to the glycosyl hydrolase 9 (cellulase E) family. Ca(2+) serves as cofactor.

It carries out the reaction Endohydrolysis of (1-&gt;4)-beta-D-glucosidic linkages in cellulose, lichenin and cereal beta-D-glucans.. This enzyme catalyzes the endohydrolysis of 1,4-beta-glucosidic linkages in cellulose, lichenin and cereal beta-D-glucans. This is Endoglucanase D (celD) from Acetivibrio thermocellus (Hungateiclostridium thermocellum).